The sequence spans 65 residues: Large ribosomal subunit protein bL32 (65 aa).

The protein belongs to the bacterial ribosomal protein bL32 family.

The sequence is that of Large ribosomal subunit protein bL32 from Tropheryma whipplei (strain TW08/27) (Whipple's bacillus).